Consider the following 336-residue polypeptide: Dihydroorotate dehydrogenase (quinone) (336 aa).

Residues 62–66 (AGLDK) and Thr-86 each bind FMN. Lys-66 lines the substrate pocket. Residue 111–115 (NRMGF) participates in substrate binding. The FMN site is built by Asn-139 and Asn-172. Asn-172 lines the substrate pocket. Ser-175 serves as the catalytic Nucleophile. Asn-177 contacts substrate. The FMN site is built by Lys-217 and Thr-245. Substrate is bound at residue 246 to 247 (NT). FMN-binding positions include Gly-268, Gly-297, and 318 to 319 (YS).

Belongs to the dihydroorotate dehydrogenase family. Type 2 subfamily. As to quaternary structure, monomer. FMN serves as cofactor.

It is found in the cell membrane. The catalysed reaction is (S)-dihydroorotate + a quinone = orotate + a quinol. It participates in pyrimidine metabolism; UMP biosynthesis via de novo pathway; orotate from (S)-dihydroorotate (quinone route): step 1/1. In terms of biological role, catalyzes the conversion of dihydroorotate to orotate with quinone as electron acceptor. This Pectobacterium carotovorum subsp. carotovorum (strain PC1) protein is Dihydroorotate dehydrogenase (quinone).